Reading from the N-terminus, the 154-residue chain is Large ribosomal subunit protein bL17 (154 aa).

The tract at residues 127–154 is disordered; that stretch reads TAAKQDRAKRVKGSKKAETEKEGGESAE. Positions 141 to 154 are enriched in basic and acidic residues; sequence KKAETEKEGGESAE.

It belongs to the bacterial ribosomal protein bL17 family. Part of the 50S ribosomal subunit. Contacts protein L32.

The polypeptide is Large ribosomal subunit protein bL17 (Chlorobaculum parvum (strain DSM 263 / NCIMB 8327) (Chlorobium vibrioforme subsp. thiosulfatophilum)).